Here is a 223-residue protein sequence, read N- to C-terminus: Kinetochore protein Spc25 (223 aa).

Residues 51–119 (RHQRKVGKLQ…NEIMERIQTL (69 aa)) are a coiled coil.

It belongs to the SPC25 family. As to quaternary structure, component of the Ndc80 complex, which is composed of Ndc80, Nuf2 and Spc25.

It is found in the nucleus. Its subcellular location is the chromosome. The protein localises to the centromere. It localises to the kinetochore. Its function is as follows. Acts as a component of the essential kinetochore-associated Ndc80 complex, which is required for chromosome segregation and spindle checkpoint activity during meiosis and mitosis. Required for kinetochore integrity and the organization of stable microtubule binding sites in the outer plate of the kinetochore. Participates in SAC signaling that responds specifically to disruptions in spindle microtubule dynamics. The NDC80 complex synergistically enhances the affinity of the SKA1 complex for microtubules and may allow the NDC80 complex to track depolymerizing microtubules. The chain is Kinetochore protein Spc25 from Drosophila teissieri (Fruit fly).